A 463-amino-acid chain; its full sequence is Nitrate/nitrite antiporter NarK (463 aa).

Topologically, residues 1–37 (MSHSSAPERATGAVITDWRPEDPAFWQQRGQRIASRN) are cytoplasmic. Residues 38–59 (LWISVPCLLLAFCVWMLFSAVA) form a helical membrane-spanning segment. The Periplasmic segment spans residues 60–73 (VNLPKVGFNFTTDQ). A helical transmembrane segment spans residues 74–95 (LFMLTALPSVSGALLRVPYSFM). Residue Arg89 participates in nitrate binding. Residue Arg89 participates in nitrite binding. The Cytoplasmic portion of the chain corresponds to 96 to 102 (VPIFGGR). The chain crosses the membrane as a helical span at residues 103-122 (RWTAFSTGILIIPCVWLGFA). The Periplasmic portion of the chain corresponds to 123–130 (VQDTSTPY). A helical transmembrane segment spans residues 131-151 (SVFIIISLLCGFAGANFASSM). At 152 to 166 (ANISFFFPKQKQGGA) the chain is on the cytoplasmic side. The chain crosses the membrane as a helical span at residues 167 to 189 (LGLNGGLGNMGVSVMQLVAPLVV). Asn175 is a binding site for nitrate. The Periplasmic portion of the chain corresponds to 190–211 (SLSIFAVFGSQGVKQPDGTELY). A helical transmembrane segment spans residues 212–233 (LANASWIWVPFLAIFTIAAWFG). Residues 234–253 (MNDLATSKASIKEQLPVLKR) lie on the Cytoplasmic side of the membrane. The chain crosses the membrane as a helical span at residues 254-281 (GHLWIMSLLYLATFGSFIGFSAGFAMLS). Tyr263 lines the nitrate pocket. Tyr263 lines the nitrite pocket. The Periplasmic portion of the chain corresponds to 282–289 (KTQFPDVQ). Residues 290 to 312 (ILQYAFFGPFIGALARSAGGALS) traverse the membrane as a helical segment. Residues 313–316 (DRLG) lie on the Cytoplasmic side of the membrane. The helical transmembrane segment at 317–338 (GTRVTLVNFILMAIFSGLLFLT) threads the bilayer. Over 339 to 347 (LPTDGQGGS) the chain is Periplasmic. Residues 348–373 (FMAFFAVFLALFLTAGLGSGSTFQMI) traverse the membrane as a helical segment. Over 374–405 (SVIFRKLTMDRVKAEGGSDERAMREAATDTAA) the chain is Cytoplasmic. A helical transmembrane segment spans residues 406–427 (ALGFISAIGAIGGFFIPKAFGS). Residue Ser411 coordinates nitrate. Residues 428 to 435 (SLALTGSP) are Periplasmic-facing. The helical transmembrane segment at 436-458 (VGAMKVFLIFYIACVVITWAVYG) threads the bilayer. The Cytoplasmic portion of the chain corresponds to 459-463 (RHSKK).

The protein belongs to the major facilitator superfamily. Nitrate/nitrite porter (TC 2.A.1.8) family.

It localises to the cell inner membrane. It carries out the reaction nitrate(in) + nitrite(out) = nitrate(out) + nitrite(in). Its function is as follows. Catalyzes nitrate uptake, nitrite uptake and nitrite export across the cytoplasmic membrane. Functions as a nitrate/nitrite exchanger, and protons are unlikely to be co-transported. The protein is Nitrate/nitrite antiporter NarK of Escherichia coli (strain K12).